The primary structure comprises 417 residues: NADH-quinone oxidoreductase subunit D 2 (417 aa).

Belongs to the complex I 49 kDa subunit family. In terms of assembly, NDH-1 is composed of 14 different subunits. Subunits NuoB, C, D, E, F, and G constitute the peripheral sector of the complex.

The protein resides in the cell membrane. It carries out the reaction a quinone + NADH + 5 H(+)(in) = a quinol + NAD(+) + 4 H(+)(out). In terms of biological role, NDH-1 shuttles electrons from NADH, via FMN and iron-sulfur (Fe-S) centers, to quinones in the respiratory chain. The immediate electron acceptor for the enzyme in this species is believed to be ubiquinone. Couples the redox reaction to proton translocation (for every two electrons transferred, four hydrogen ions are translocated across the cytoplasmic membrane), and thus conserves the redox energy in a proton gradient. This chain is NADH-quinone oxidoreductase subunit D 2, found in Roseiflexus sp. (strain RS-1).